Reading from the N-terminus, the 110-residue chain is UPF0060 membrane protein AHA_2410 (110 aa).

A run of 4 helical transmembrane segments spans residues 8–28, 33–53, 63–83, and 87–107; these read GLFLVTALAEILGCYLPYLWL, SVWLLLPAGLSLMLFAWLLSL, AAYGGVYIFVAILWLWLVDGI, and LWDLVGSLVALCGMAIIMFAP.

Belongs to the UPF0060 family.

It localises to the cell inner membrane. The protein is UPF0060 membrane protein AHA_2410 of Aeromonas hydrophila subsp. hydrophila (strain ATCC 7966 / DSM 30187 / BCRC 13018 / CCUG 14551 / JCM 1027 / KCTC 2358 / NCIMB 9240 / NCTC 8049).